A 107-amino-acid polypeptide reads, in one-letter code: MNTDLLVTTTEHIPGKEYEVIGEVFGLTTQSKNVLRNMGAALKNVVGGEIKDYTKMLDEARNISVDRLRKNARDMGADAVVMMRFDSGSIGTDMQSVAAYGTAVKYV.

The protein belongs to the UPF0145 family.

This is UPF0145 protein LVIS_1527 from Levilactobacillus brevis (strain ATCC 367 / BCRC 12310 / CIP 105137 / JCM 1170 / LMG 11437 / NCIMB 947 / NCTC 947) (Lactobacillus brevis).